A 332-amino-acid polypeptide reads, in one-letter code: Glycerol-3-phosphate dehydrogenase [NAD(P)+] (332 aa).

The NADPH site is built by Trp11, Arg30, and Lys108. 3 residues coordinate sn-glycerol 3-phosphate: Lys108, Gly137, and Ser139. Ala141 is a binding site for NADPH. Residues Lys192, Asp245, Ser255, Arg256, and Asn257 each contribute to the sn-glycerol 3-phosphate site. The active-site Proton acceptor is the Lys192. NADPH is bound at residue Arg256. The NADPH site is built by Val280 and Glu282.

Belongs to the NAD-dependent glycerol-3-phosphate dehydrogenase family.

The protein resides in the cytoplasm. It catalyses the reaction sn-glycerol 3-phosphate + NAD(+) = dihydroxyacetone phosphate + NADH + H(+). It carries out the reaction sn-glycerol 3-phosphate + NADP(+) = dihydroxyacetone phosphate + NADPH + H(+). It participates in membrane lipid metabolism; glycerophospholipid metabolism. Its function is as follows. Catalyzes the reduction of the glycolytic intermediate dihydroxyacetone phosphate (DHAP) to sn-glycerol 3-phosphate (G3P), the key precursor for phospholipid synthesis. The polypeptide is Glycerol-3-phosphate dehydrogenase [NAD(P)+] (Burkholderia thailandensis (strain ATCC 700388 / DSM 13276 / CCUG 48851 / CIP 106301 / E264)).